A 334-amino-acid polypeptide reads, in one-letter code: Trans-1,2-dihydrobenzene-1,2-diol dehydrogenase (334 aa).

It belongs to the Gfo/Idh/MocA family. In terms of assembly, homodimer. As to expression, kidney.

The enzyme catalyses (1R,2R)-1,2-dihydrobenzene-1,2-diol + NADP(+) = catechol + NADPH + H(+). It carries out the reaction D-xylose + NADP(+) = D-xylono-1,5-lactone + NADPH + H(+). This Macaca fascicularis (Crab-eating macaque) protein is Trans-1,2-dihydrobenzene-1,2-diol dehydrogenase (DHDH).